A 137-amino-acid polypeptide reads, in one-letter code: NADPH-dependent 7-cyano-7-deazaguanine reductase (137 aa).

Cys51 serves as the catalytic Thioimide intermediate. The active-site Proton donor is Asp58. Substrate is bound by residues 73–75 (VEL) and 92–93 (HE).

Belongs to the GTP cyclohydrolase I family. QueF type 1 subfamily.

It localises to the cytoplasm. The enzyme catalyses 7-aminomethyl-7-carbaguanine + 2 NADP(+) = 7-cyano-7-deazaguanine + 2 NADPH + 3 H(+). The protein operates within tRNA modification; tRNA-queuosine biosynthesis. In terms of biological role, catalyzes the NADPH-dependent reduction of 7-cyano-7-deazaguanine (preQ0) to 7-aminomethyl-7-deazaguanine (preQ1). The sequence is that of NADPH-dependent 7-cyano-7-deazaguanine reductase from Gloeobacter violaceus (strain ATCC 29082 / PCC 7421).